The chain runs to 392 residues: Acyl-CoA dehydrogenase IpdE1 (392 aa).

FAD contacts are provided by residues 126–129 (QGYS) and serine 171. Glutamate 254 (proton acceptor) is an active-site residue. 371-373 (SNE) contributes to the FAD binding site.

This sequence belongs to the acyl-CoA dehydrogenase family. In terms of assembly, heterotetramer composed of 2 IpdE1 subunits and 2 IpdE2 subunits. FAD is required as a cofactor.

The enzyme catalyses 3-[(3aS,4S,5R,7aS)-5-hydroxy-7a-methyl-1-oxo-octahydro-1H-inden-4-yl]propanoyl-CoA + A = (2E)-3-[(3aS,4S,5R,7aS)-5-hydroxy-7a-methyl-1-oxo-octahydro-1H-inden-4-yl]prop-2-enoyl-CoA + AH2. The protein operates within steroid metabolism; cholesterol degradation. Involved in cholesterol degradation. Catalyzes the dehydrogenation of 5OH-HIP-CoA to 5OH-HIPE-CoA. This chain is Acyl-CoA dehydrogenase IpdE1, found in Mycolicibacterium smegmatis (strain ATCC 700084 / mc(2)155) (Mycobacterium smegmatis).